The following is a 185-amino-acid chain: Small ribosomal subunit protein uS4 (185 aa).

The region spanning 107–179 (RRLQTLVYRK…NGRRKRKNNH (73 aa)) is the S4 RNA-binding domain. The interval 161–185 (NTPLTNPEINGRRKRKNNHAGKEDN) is disordered.

It belongs to the universal ribosomal protein uS4 family.

The protein is Small ribosomal subunit protein uS4 of Entamoeba histolytica (strain ATCC 30459 / HM-1:IMSS / ABRM).